The chain runs to 797 residues: Probable exo-1,4-beta-xylosidase xlnD (797 aa).

A signal peptide spans 1-20 (MPGAASIVAVLAALLPTALG). N-linked (GlcNAc...) asparagine glycosylation is found at Asn-23, Asn-87, Asn-142, and Asn-237. The active site involves Asp-310. Residues Asn-326, Asn-391, Asn-404, Asn-442, Asn-479, Asn-521, Asn-617, Asn-644, Asn-657, Asn-684, and Asn-706 are each glycosylated (N-linked (GlcNAc...) asparagine).

Belongs to the glycosyl hydrolase 3 family.

Its subcellular location is the secreted. It carries out the reaction Hydrolysis of (1-&gt;4)-beta-D-xylans, to remove successive D-xylose residues from the non-reducing termini.. It functions in the pathway glycan degradation; xylan degradation. Xylan 1,4-beta-xylosidase involved in the hydrolysis of xylan, a major structural heterogeneous polysaccharide found in plant biomass representing the second most abundant polysaccharide in the biosphere, after cellulose. This Aspergillus flavus (strain ATCC 200026 / FGSC A1120 / IAM 13836 / NRRL 3357 / JCM 12722 / SRRC 167) protein is Probable exo-1,4-beta-xylosidase xlnD (xlnD).